The primary structure comprises 473 residues: 3-isopropylmalate dehydratase large subunit (473 aa).

Residues cysteine 354, cysteine 414, and cysteine 417 each contribute to the [4Fe-4S] cluster site.

Belongs to the aconitase/IPM isomerase family. LeuC type 1 subfamily. In terms of assembly, heterodimer of LeuC and LeuD. The cofactor is [4Fe-4S] cluster.

The enzyme catalyses (2R,3S)-3-isopropylmalate = (2S)-2-isopropylmalate. It functions in the pathway amino-acid biosynthesis; L-leucine biosynthesis; L-leucine from 3-methyl-2-oxobutanoate: step 2/4. Catalyzes the isomerization between 2-isopropylmalate and 3-isopropylmalate, via the formation of 2-isopropylmaleate. The sequence is that of 3-isopropylmalate dehydratase large subunit from Mycobacterium bovis (strain ATCC BAA-935 / AF2122/97).